The primary structure comprises 1437 residues: uncharacterized protein (1437 aa).

The N-terminal stretch at 1–25 is a signal peptide; that stretch reads MRRGCRHHLAAVVLLIATFPPLAYN. The Extracellular portion of the chain corresponds to 26-1326; the sequence is QNIGGINQNI…SRIKENYFKW (1301 aa). N-linked (GlcNAc...) asparagine glycans are attached at residues N103, N315, N364, N492, N605, N676, and N914. The NIDO domain occupies 193–356; the sequence is AFFGQQASQA…GRYMFRVDDV (164 aa). In terms of domain architecture, AMOP spans 648–829; it reads VKEKSREMCH…FRCQMFYWRR (182 aa). The chain crosses the membrane as a helical span at residues 1327-1347; the sequence is LAVIAGIVGIIIVILLIFLVF. Residues 1348–1437 lie on the Cytoplasmic side of the membrane; it reads WCIKRKKLQE…QGMLGLNTSV (90 aa). The interval 1394 to 1419 is disordered; it reads PRTVAMPPPRGTTATPMTLEPRGFSP.

Its subcellular location is the membrane. This is an uncharacterized protein from Caenorhabditis elegans.